The following is a 392-amino-acid chain: F-box protein At5g65850 (392 aa).

The F-box domain maps to 29–78 (TEKSVQIPVDIIIEILLRLPAKSIATCRCVSKLWISVICRQDFTELFLTR).

This Arabidopsis thaliana (Mouse-ear cress) protein is F-box protein At5g65850.